The chain runs to 348 residues: tRNA N6-adenosine threonylcarbamoyltransferase (348 aa).

The Fe cation site is built by His-111 and His-115. Substrate contacts are provided by residues 134–138, Asp-167, Gly-180, Asp-184, and Asn-280; that span reads LVSGG. Fe cation is bound at residue Asp-308.

This sequence belongs to the KAE1 / TsaD family. Fe(2+) serves as cofactor.

It localises to the cytoplasm. It carries out the reaction L-threonylcarbamoyladenylate + adenosine(37) in tRNA = N(6)-L-threonylcarbamoyladenosine(37) in tRNA + AMP + H(+). Required for the formation of a threonylcarbamoyl group on adenosine at position 37 (t(6)A37) in tRNAs that read codons beginning with adenine. Is involved in the transfer of the threonylcarbamoyl moiety of threonylcarbamoyl-AMP (TC-AMP) to the N6 group of A37, together with TsaE and TsaB. TsaD likely plays a direct catalytic role in this reaction. This is tRNA N6-adenosine threonylcarbamoyltransferase from Rippkaea orientalis (strain PCC 8801 / RF-1) (Cyanothece sp. (strain PCC 8801)).